The chain runs to 273 residues: MSNTSIRIAVAGAGGRMGRQLIQAVAQSEQATLGAALTRTDSALCGVDAGELAGIGALGVAISGELAAVKDDFDILIDFTRPDASMAYLAFCRRHHKGIVIGTTGFSDAQKEAIRAEAQETGVVFAANFSVGVNLMLKLLEKAAQVMGEEADIEIIEAHHRHKVDAPSGTALAMGEAIAGALGRDLARCAVYSREGHTGERKAKSIGFATVRAGDIVGEHTAMFAEIGERLEITHKASSRMTFASGAVRAAVWLSGQKRGFFDMVNVLNLDKI.

12–17 (GAGGRM) contributes to the NAD(+) binding site. Arg39 provides a ligand contact to NADP(+). NAD(+)-binding positions include 102-104 (GTT) and 126-129 (AANF). His159 functions as the Proton donor/acceptor in the catalytic mechanism. His160 lines the (S)-2,3,4,5-tetrahydrodipicolinate pocket. The active-site Proton donor is Lys163. 169–170 (GT) contributes to the (S)-2,3,4,5-tetrahydrodipicolinate binding site.

Belongs to the DapB family. In terms of assembly, homotetramer.

Its subcellular location is the cytoplasm. It catalyses the reaction (S)-2,3,4,5-tetrahydrodipicolinate + NAD(+) + H2O = (2S,4S)-4-hydroxy-2,3,4,5-tetrahydrodipicolinate + NADH + H(+). The catalysed reaction is (S)-2,3,4,5-tetrahydrodipicolinate + NADP(+) + H2O = (2S,4S)-4-hydroxy-2,3,4,5-tetrahydrodipicolinate + NADPH + H(+). The protein operates within amino-acid biosynthesis; L-lysine biosynthesis via DAP pathway; (S)-tetrahydrodipicolinate from L-aspartate: step 4/4. Catalyzes the conversion of 4-hydroxy-tetrahydrodipicolinate (HTPA) to tetrahydrodipicolinate. The protein is 4-hydroxy-tetrahydrodipicolinate reductase of Sodalis glossinidius (strain morsitans).